Reading from the N-terminus, the 294-residue chain is Acetylglutamate kinase (294 aa).

Residues 63-64, Arg-85, and Asn-188 contribute to the substrate site; that span reads GG.

This sequence belongs to the acetylglutamate kinase family. ArgB subfamily.

Its subcellular location is the cytoplasm. It catalyses the reaction N-acetyl-L-glutamate + ATP = N-acetyl-L-glutamyl 5-phosphate + ADP. Its pathway is amino-acid biosynthesis; L-arginine biosynthesis; N(2)-acetyl-L-ornithine from L-glutamate: step 2/4. In terms of biological role, catalyzes the ATP-dependent phosphorylation of N-acetyl-L-glutamate. The protein is Acetylglutamate kinase of Methanococcus aeolicus (strain ATCC BAA-1280 / DSM 17508 / OCM 812 / Nankai-3).